A 115-amino-acid polypeptide reads, in one-letter code: NADH-ubiquinone oxidoreductase chain 3 (115 aa).

Helical transmembrane passes span 4–24 (ILTL…AFWL), 55–75 (FFLV…LLPL), and 84–104 (SYLT…GLAY).

This sequence belongs to the complex I subunit 3 family. In terms of assembly, core subunit of respiratory chain NADH dehydrogenase (Complex I) which is composed of 45 different subunits. Interacts with TMEM186. Interacts with TMEM242.

Its subcellular location is the mitochondrion inner membrane. It carries out the reaction a ubiquinone + NADH + 5 H(+)(in) = a ubiquinol + NAD(+) + 4 H(+)(out). Its function is as follows. Core subunit of the mitochondrial membrane respiratory chain NADH dehydrogenase (Complex I) which catalyzes electron transfer from NADH through the respiratory chain, using ubiquinone as an electron acceptor. Essential for the catalytic activity of complex I. The protein is NADH-ubiquinone oxidoreductase chain 3 of Necromys lactens (Rufous-bellied bolo mouse).